Consider the following 431-residue polypeptide: Magnetosome protein MamH (431 aa).

Helical transmembrane passes span 21–41 (LLSA…PLFL), 57–77 (ANVQ…LGYL), 86–106 (IIVA…LSPW), 107–127 (IGGA…IMSA), 156–176 (TAFM…QIPA), 178–198 (AGIA…AWLA), 243–263 (MVFV…LIKV), 274–294 (ILIG…RSFI), 302–321 (AVLL…GFII), 358–378 (LLGS…IFFV), and 380–400 (VGGF…TGVG).

Belongs to the major facilitator superfamily.

The protein resides in the magnetosome membrane. Its function is as follows. Required for correct biomineralization of the magnetosome; probably transports some form of iron. Partially functionally redundant with MamZ. This Paramagnetospirillum magneticum (strain ATCC 700264 / AMB-1) (Magnetospirillum magneticum) protein is Magnetosome protein MamH (mamH).